The chain runs to 414 residues: Serine hydroxymethyltransferase (414 aa).

(6S)-5,6,7,8-tetrahydrofolate-binding positions include L117 and 121 to 123; that span reads GHL. An N6-(pyridoxal phosphate)lysine modification is found at K226. Residue 349-351 participates in (6S)-5,6,7,8-tetrahydrofolate binding; sequence SPF.

Belongs to the SHMT family. As to quaternary structure, homodimer. Pyridoxal 5'-phosphate serves as cofactor.

It localises to the cytoplasm. It carries out the reaction (6R)-5,10-methylene-5,6,7,8-tetrahydrofolate + glycine + H2O = (6S)-5,6,7,8-tetrahydrofolate + L-serine. It participates in one-carbon metabolism; tetrahydrofolate interconversion. Its pathway is amino-acid biosynthesis; glycine biosynthesis; glycine from L-serine: step 1/1. Functionally, catalyzes the reversible interconversion of serine and glycine with tetrahydrofolate (THF) serving as the one-carbon carrier. This reaction serves as the major source of one-carbon groups required for the biosynthesis of purines, thymidylate, methionine, and other important biomolecules. Also exhibits THF-independent aldolase activity toward beta-hydroxyamino acids, producing glycine and aldehydes, via a retro-aldol mechanism. The chain is Serine hydroxymethyltransferase from Desulfovibrio desulfuricans (strain ATCC 27774 / DSM 6949 / MB).